A 499-amino-acid chain; its full sequence is Glutamyl-tRNA(Gln) amidotransferase subunit A (499 aa).

Residues Lys-79 and Ser-154 each act as charge relay system in the active site. Ser-178 (acyl-ester intermediate) is an active-site residue.

This sequence belongs to the amidase family. GatA subfamily. Heterotrimer of A, B and C subunits.

It catalyses the reaction L-glutamyl-tRNA(Gln) + L-glutamine + ATP + H2O = L-glutaminyl-tRNA(Gln) + L-glutamate + ADP + phosphate + H(+). Its function is as follows. Allows the formation of correctly charged Gln-tRNA(Gln) through the transamidation of misacylated Glu-tRNA(Gln) in organisms which lack glutaminyl-tRNA synthetase. The reaction takes place in the presence of glutamine and ATP through an activated gamma-phospho-Glu-tRNA(Gln). In Psychrobacter sp. (strain PRwf-1), this protein is Glutamyl-tRNA(Gln) amidotransferase subunit A.